We begin with the raw amino-acid sequence, 603 residues long: MDRKRSFEKIVVSVMVGKNVQKFLTFVEDEPDFQGGPIPSKYLIPKKINLMVYTLFQVHTLKFNRKDYDTLSLFYLNRGYYNELSFRVLERCYEIASARPNDSSTMRTFTDFVSGTPIVRSLQKSTIRKYGYNLAPYMFLLLHVDELSIFSAYQASLPGEKKVDTERLKRDLCPRKPTEIKYFSQICNDMMNKKDRLGDVLATAQRIRRRYNKNGSSEPRLKTLDGLTSERWIQWLGLESDYHCSFSSTRNAEDVVAGEAASSDHDQKISRVTRKRPREPKSTNDILVAGRKLFGSSFEFRDLHQLRLCHEIYMADTPSVAVQAPPGYGKTELFHLPLIALASKGDVKYVSFLFVPYTVLLANCMIRLGRRGCLNVAPVRNFIEEGCDGVTDLYVGIYDDLASTNFTDRIAAWENIVECTFRTNNVKLGYLIVDEFHNFETEVYRQSQFGGITNLDFDAFEKAIFLSGTAPEAVADAALQRIGLTGLAKKSMDINELKRSEDLSRGLSSYPTRMFNLIKEKSEVPLGHVHKIWKKVESQPEEALKLLLALFEIEPESKAIVVASTTNEVEELACSWRKYFRVVWIHGKLGCCRKGVSHKGVCH.

The segment at 257–281 (AGEAASSDHDQKISRVTRKRPREPK) is disordered.

This is an uncharacterized protein from Saccharomyces cerevisiae (strain ATCC 204508 / S288c) (Baker's yeast).